We begin with the raw amino-acid sequence, 174 residues long: NADH-quinone oxidoreductase subunit B 2 (174 aa).

[4Fe-4S] cluster is bound by residues C51, C52, C116, and C145.

Belongs to the complex I 20 kDa subunit family. NDH-1 is composed of 14 different subunits. Subunits NuoB, C, D, E, F, and G constitute the peripheral sector of the complex. [4Fe-4S] cluster is required as a cofactor.

It is found in the cell inner membrane. The enzyme catalyses a quinone + NADH + 5 H(+)(in) = a quinol + NAD(+) + 4 H(+)(out). Its function is as follows. NDH-1 shuttles electrons from NADH, via FMN and iron-sulfur (Fe-S) centers, to quinones in the respiratory chain. The immediate electron acceptor for the enzyme in this species is believed to be ubiquinone. Couples the redox reaction to proton translocation (for every two electrons transferred, four hydrogen ions are translocated across the cytoplasmic membrane), and thus conserves the redox energy in a proton gradient. This Thermodesulfovibrio yellowstonii (strain ATCC 51303 / DSM 11347 / YP87) protein is NADH-quinone oxidoreductase subunit B 2.